The following is a 258-amino-acid chain: Allene oxide cyclase 3, chloroplastic (258 aa).

A chloroplast-targeting transit peptide spans 1–56 (MASSSAAMSLESISMTTLNNLSRNHQSHRSSLLGFSRSFQNLGISSNGPDFSSRSR).

Belongs to the allene oxide cyclase family. Highly expressed in fully developed leaves.

It localises to the plastid. It is found in the chloroplast. The enzyme catalyses (9Z,13S,15Z)-12,13-epoxyoctadeca-9,11,15-trienoate = (9S,13S,15Z)-12-oxophyto-10,15-dienoate. Involved in the production of 12-oxo-phytodienoic acid (OPDA), a precursor of jasmonic acid. This Arabidopsis thaliana (Mouse-ear cress) protein is Allene oxide cyclase 3, chloroplastic (AOC3).